Here is a 704-residue protein sequence, read N- to C-terminus: ATP-dependent zinc metalloprotease FTSH 5, chloroplastic (704 aa).

The N-terminal 58 residues, 1–58 (MATTSSNPLLLSSNFLGSQIIISAPTPKTTTKSLPFSVISRKRYQISQSEKLMKSLPS), are a transit peptide targeting the chloroplast. The N-terminal 18 residues, 59-76 (QAALAALLFSSSSPQALA), are a transit peptide targeting the thylakoid. Residues 193–213 (FDFIGNLLFPLLAFGGLFYLF) traverse the membrane as a helical segment. 290 to 297 (GPPGTGKT) is a binding site for ATP. Zn(2+) is bound at residue His512. Glu513 is an active-site residue. Positions 516 and 593 each coordinate Zn(2+).

In the N-terminal section; belongs to the AAA ATPase family. The protein in the C-terminal section; belongs to the peptidase M41 family. As to quaternary structure, heterohexamers with FTSH1, FTSH2 and FTSH8. Requires Zn(2+) as cofactor. In terms of tissue distribution, ubiquitous.

It is found in the plastid. It localises to the chloroplast thylakoid membrane. In terms of biological role, part of a complex that function as an ATP-dependent zinc metallopeptidase. Involved in the thylakoid formation and in the removal of damaged D1 in the photosystem II, preventing cell death under high-intensity light conditions. Not involved in the degradation of the light-harvesting complex of photosystem II (LHC II) or in thermotolerance. The protein is ATP-dependent zinc metalloprotease FTSH 5, chloroplastic (FTSH5) of Arabidopsis thaliana (Mouse-ear cress).